The sequence spans 144 residues: Maximins 1/H12 (144 aa).

Residues 1 to 18 (MNFKYIVAVSFLIASAYA) form the signal peptide. Residues 19 to 43 (RSEENDEQSLSQRDVLEEESLREIR) constitute a propeptide that is removed on maturation. N70 is subject to Asparagine amide. A propeptide spanning residues 74 to 123 (TAEEHEVMKRLEVVMRDLDSLDYPEEASERETRDFNQEEIANLYTKKEKR) is cleaved from the precursor. An Isoleucine amide modification is found at I143.

It belongs to the bombinin family. As to expression, expressed by the skin glands.

Its subcellular location is the secreted. Functionally, maximin-1 shows antibacterial activity against both Gram-positive and Gram-negative bacteria. It also shows antimicrobial activity against the fungus C.albicans, but not against A.flavus nor P.uticale. It has little hemolytic activity. It possess a significant cytotoxicity against tumor cell lines. It does not possess a significant anti-HIV activity. It shows high spermicidal activity. Maximin-H12 shows antimicrobial activity against bacteria and against the fungus C.albicans. Shows strong hemolytic activity. The chain is Maximins 1/H12 from Bombina maxima (Giant fire-bellied toad).